The chain runs to 326 residues: MGTVKCIGILTSGGDAPGMNAAIRAVTRAAIYNGLQVKGIYRGYKGLVTGEIKEFKSQNVSNIIQLGGTILKTARCKEFTTPEGRQLAYDNMKREGIDALVIIGGDGSLTGARIFAQEFDVPCIGLPGTIDNDLYGTDTTIGYDTALNTILDAVDKIRDTATSHERLFFVEVMGRDAGFLALNGAIASGAEAAIIPEFSTEVDQLEEFIKNGFRKSKNSSIVLVAESELTGGAMHYAERVKNEYPQYDVRVTILGHLQRGGSPTAHDRILASRLGAAAIDAIMEDQRNVMIGIEHDEIVYVPFSKAIKNDKPVKRDLVNVLKELSI.

Gly14 provides a ligand contact to ATP. 24–28 (RAVTR) contributes to the ADP binding site. Residues 75–76 (RC) and 105–108 (GDGS) each bind ATP. Asp106 is a Mg(2+) binding site. Residue 129-131 (TID) coordinates substrate. Asp131 (proton acceptor) is an active-site residue. Position 158 (Arg158) interacts with ADP. Substrate-binding positions include Arg166 and 173-175 (MGR). Residues 189-191 (GAE), Lys215, and 217-219 (KNS) each bind ADP. Residues Glu226, Arg250, and 256–259 (HLQR) each bind substrate.

This sequence belongs to the phosphofructokinase type A (PFKA) family. ATP-dependent PFK group I subfamily. Prokaryotic clade 'B1' sub-subfamily. In terms of assembly, homotetramer. Mg(2+) serves as cofactor.

It localises to the cytoplasm. It catalyses the reaction beta-D-fructose 6-phosphate + ATP = beta-D-fructose 1,6-bisphosphate + ADP + H(+). The protein operates within carbohydrate degradation; glycolysis; D-glyceraldehyde 3-phosphate and glycerone phosphate from D-glucose: step 3/4. Its activity is regulated as follows. Allosterically activated by ADP and other diphosphonucleosides, and allosterically inhibited by phosphoenolpyruvate. Functionally, catalyzes the phosphorylation of D-fructose 6-phosphate to fructose 1,6-bisphosphate by ATP, the first committing step of glycolysis. This chain is ATP-dependent 6-phosphofructokinase 2, found in Bacteroides thetaiotaomicron (strain ATCC 29148 / DSM 2079 / JCM 5827 / CCUG 10774 / NCTC 10582 / VPI-5482 / E50).